The primary structure comprises 157 residues: Protein AE7 (157 aa).

It belongs to the MIP18 family. In terms of assembly, part of a complex formed of AE7, CIA1, MMS19 and NAR1. Interacts with CIA1 and MMS19, but not with NAR1. In terms of tissue distribution, expressed in the embryo, shoot apical meristem, leaf primordia, inflorescence and all floral organs.

The protein localises to the nucleus. It is found in the cytoplasm. Central member of the cytosolic iron-sulfur (Fe-S) protein assembly (CIA) pathway. Involved in leaf polarity formation. Promotes leaf adaxial identity. May play a role in the cell cycle progression and is required for cell proliferation. The chain is Protein AE7 from Arabidopsis thaliana (Mouse-ear cress).